The primary structure comprises 468 residues: Cysteine--tRNA ligase (468 aa).

Cysteine 27 contributes to the Zn(2+) binding site. Positions 29–39 match the 'HIGH' region motif; it reads PTVYNYFHIGN. Residues cysteine 207, histidine 232, and glutamate 236 each contribute to the Zn(2+) site. The 'KMSKS' region signature appears at 264–268; that stretch reads KMAKS. Lysine 267 provides a ligand contact to ATP.

The protein belongs to the class-I aminoacyl-tRNA synthetase family. In terms of assembly, monomer. Zn(2+) serves as cofactor.

The protein resides in the cytoplasm. It catalyses the reaction tRNA(Cys) + L-cysteine + ATP = L-cysteinyl-tRNA(Cys) + AMP + diphosphate. The chain is Cysteine--tRNA ligase from Acetivibrio thermocellus (strain ATCC 27405 / DSM 1237 / JCM 9322 / NBRC 103400 / NCIMB 10682 / NRRL B-4536 / VPI 7372) (Clostridium thermocellum).